The chain runs to 114 residues: MKARIIYRASFDAAHAVKIEEWEELHGHTFSLEVVVEGEIKKGYVMDFLKLKKVVDGVVKELDHRNLNKIMDNPTTENIALWISERIRKNLPGDVKLKRLSLWEGNEFGVELEW.

The Zn(2+) site is built by histidine 15, histidine 26, and histidine 28.

The protein belongs to the PTPS family. Zn(2+) serves as cofactor.

It carries out the reaction 7,8-dihydroneopterin 3'-phosphate = glycolaldehyde phosphate + 6-hydroxymethyl-7,8-dihydropterin. In terms of biological role, catalyzes the conversion of 7,8-dihydroneopterin monophosphate (H2NMP) to 6-hydroxymethyl-7,8-dihydropterin (6-HMD). Cannot use 7,8-dihydroneopterin (H2Neo) or 7,8-dihydroneopterin triphosphate (H2NTP) as substrate. The polypeptide is Dihydroneopterin monophosphate aldolase (Pyrococcus furiosus (strain ATCC 43587 / DSM 3638 / JCM 8422 / Vc1)).